We begin with the raw amino-acid sequence, 721 residues long: Solute carrier family 12 member 8 (721 aa).

Transmembrane regions (helical) follow at residues 53-73 (FGTWDGVFTSCMINIFGVVLF), 84-104 (GVLLGIVLVSFVILVALVTVL), 115-135 (IGSGGVYSMVSTVLGGKVGGT), 136-156 (IGVLYIFGQCVAGAMYITGFA), 174-194 (ISLAVLVGLLGINLAGVKWII), 196-216 (LQLLLFLLLAVSTLDFVIGSF), 247-267 (FFTVFGVFFPAATGVMVGFNM), 283-303 (LAAIGTSWFLYVVFVFLLGAI), 321-341 (LVGGLFLLGLYISSLASCMGG), 374-394 (PVAAIFITGLLTMAFVFIGQV), and 397-417 (LAPIVTINFMLTYSAVDYSYF). Disordered regions lie at residues 473–505 (PNHTEAPESTSSQEKDPKMFKFSKPRKPAKQTL) and 533–580 (NESQ…STVA). The span at 553 to 565 (TESDEPDSEEDVD) shows a compositional bias: acidic residues. Helical transmembrane passes span 606 to 626 (FLGAILSIVIMFVIQWIYALV) and 628 to 648 (LGVAIILYLYIGRVNPGLNPG).

It belongs to the SLC12A transporter family.

The protein localises to the membrane. Cation/chloride cotransporter. This Xenopus laevis (African clawed frog) protein is Solute carrier family 12 member 8 (slc12a8).